A 321-amino-acid polypeptide reads, in one-letter code: Beta-1,3-N-acetylglucosaminyltransferase manic fringe (321 aa).

Over 1–7 (MQCRLPR) the chain is Cytoplasmic. Residues 8-27 (GLAGALLTLLCMGLLCLRYH) traverse the membrane as a helical; Signal-anchor for type II membrane protein segment. Over 28 to 321 (LNLSPQRVQG…TPWCPQLGAR (294 aa)) the chain is Lumenal. Residue arginine 70 participates in substrate binding. Asparagine 109 is a glycosylation site (N-linked (GlcNAc...) asparagine). 2 cysteine pairs are disulfide-bonded: cysteine 110–cysteine 121 and cysteine 139–cysteine 202. Aspartate 143 is a binding site for substrate. Aspartate 144 contacts Mn(2+). Asparagine 185 carries an N-linked (GlcNAc...) asparagine glycan. Aspartate 232 is an active-site residue. Histidine 256 is a Mn(2+) binding site. Cysteine 306 and cysteine 315 are joined by a disulfide.

The protein belongs to the glycosyltransferase 31 family. Requires Mn(2+) as cofactor.

The protein resides in the golgi apparatus membrane. It catalyses the reaction 3-O-(alpha-L-fucosyl)-L-threonyl-[EGF-like domain protein] + UDP-N-acetyl-alpha-D-glucosamine = 3-O-(N-acetyl-beta-D-glucosaminyl-(1-&gt;3)-alpha-L-fucosyl)-L-threonyl-[EGF-like domain protein] + UDP + H(+). The enzyme catalyses 3-O-(alpha-L-fucosyl)-L-seryl-[EGF-like domain protein] + UDP-N-acetyl-alpha-D-glucosamine = 3-O-(N-acetyl-beta-D-glucosaminyl-(1-&gt;3)-alpha-L-fucosyl)-L-seryl-[EGF-like domain protein] + UDP + H(+). Functionally, glycosyltransferase that initiates the elongation of O-linked fucose residues attached to EGF-like repeats in the extracellular domain of Notch molecules. Modulates NOTCH1 activity by modifying O-fucose residues at specific EGF-like domains resulting in inhibition of NOTCH1 activation by JAG1 and enhancement of NOTCH1 activation by DLL1 via an increase in its binding to DLL1. In Homo sapiens (Human), this protein is Beta-1,3-N-acetylglucosaminyltransferase manic fringe.